The following is a 403-amino-acid chain: S-adenosylmethionine synthase (403 aa).

H16 serves as a coordination point for ATP. D18 contacts Mg(2+). A K(+)-binding site is contributed by E44. E57 and Q110 together coordinate L-methionine. A flexible loop region spans residues 110–120; the sequence is QSAHIAQGVDA. ATP-binding positions include 175–177, D253, 259–260, A276, and K280; these read DSK and RK. D253 contacts L-methionine. K284 provides a ligand contact to L-methionine.

It belongs to the AdoMet synthase family. Homotetramer; dimer of dimers. Mg(2+) serves as cofactor. Requires K(+) as cofactor.

Its subcellular location is the cytoplasm. It catalyses the reaction L-methionine + ATP + H2O = S-adenosyl-L-methionine + phosphate + diphosphate. The protein operates within amino-acid biosynthesis; S-adenosyl-L-methionine biosynthesis; S-adenosyl-L-methionine from L-methionine: step 1/1. Its function is as follows. Catalyzes the formation of S-adenosylmethionine (AdoMet) from methionine and ATP. The overall synthetic reaction is composed of two sequential steps, AdoMet formation and the subsequent tripolyphosphate hydrolysis which occurs prior to release of AdoMet from the enzyme. The protein is S-adenosylmethionine synthase of Erythrobacter litoralis (strain HTCC2594).